The chain runs to 486 residues: N-succinylglutamate 5-semialdehyde dehydrogenase (486 aa).

220-225 (GSSRTG) provides a ligand contact to NAD(+). Residues Glu-243 and Cys-277 contribute to the active site.

The protein belongs to the aldehyde dehydrogenase family. AstD subfamily.

It carries out the reaction N-succinyl-L-glutamate 5-semialdehyde + NAD(+) + H2O = N-succinyl-L-glutamate + NADH + 2 H(+). Its pathway is amino-acid degradation; L-arginine degradation via AST pathway; L-glutamate and succinate from L-arginine: step 4/5. Functionally, catalyzes the NAD-dependent reduction of succinylglutamate semialdehyde into succinylglutamate. This chain is N-succinylglutamate 5-semialdehyde dehydrogenase, found in Shewanella baltica (strain OS155 / ATCC BAA-1091).